The following is a 311-amino-acid chain: Cytosolic Fe-S cluster assembly factor Nubp1 homolog (311 aa).

Residues cysteine 9, cysteine 23, cysteine 26, and cysteine 32 each contribute to the [4Fe-4S] cluster site. 63–70 (GKGGVGKS) is an ATP binding site. Cysteine 241 and cysteine 244 together coordinate [4Fe-4S] cluster.

Belongs to the Mrp/NBP35 ATP-binding proteins family. NUBP1/NBP35 subfamily. As to quaternary structure, heterotetramer of 2 Nubp1 and 2 Nubp2 chains. Requires [4Fe-4S] cluster as cofactor.

The protein localises to the cytoplasm. Functionally, component of the cytosolic iron-sulfur (Fe/S) protein assembly (CIA) machinery. Required for maturation of extramitochondrial Fe-S proteins. The Nubp1-Nubp2 heterotetramer forms a Fe-S scaffold complex, mediating the de novo assembly of an Fe-S cluster and its transfer to target apoproteins. The sequence is that of Cytosolic Fe-S cluster assembly factor Nubp1 homolog from Drosophila grimshawi (Hawaiian fruit fly).